The chain runs to 514 residues: Pantothenate transporter liz1 (514 aa).

12 helical membrane-spanning segments follow: residues 24–44 (LLIKIDWFILSYCCVSYFINY), 72–92 (INVVFTCGYIIGQLPGSYALQ), 98–118 (LWFSVMNILWGLMTIFSFAVH), 128–148 (FFMAVAEASTFAGTHYILGAW), 159–179 (GIFSASGLVGTMFAGYLQTAV), 194–214 (WLFIIDGILTIPLSLYGLFLF), 263–283 (GLCILWIFSGETQAIAVNVLM), 300–320 (NYPTVITAVGVVSTLGASVIS), 329–349 (WPFGLFLCVITTVSATILLAW), 357–377 (FFAYFASGCTYAGQAVWFSWA), 390–410 (VVVFLMNMCQNIWHIWWAPIM), and 423–443 (LIGLLVVGGIVFVSSCIVSYM).

The protein belongs to the major facilitator superfamily. Allantoate permease family.

The protein localises to the cell membrane. Its function is as follows. Transports pantothenate into the cell. The protein is Pantothenate transporter liz1 (liz1) of Schizosaccharomyces pombe (strain 972 / ATCC 24843) (Fission yeast).